A 284-amino-acid chain; its full sequence is Ribosomal RNA small subunit methyltransferase A (284 aa).

S-adenosyl-L-methionine-binding residues include Asn22, Leu24, Gly49, Glu70, Asp97, and Asn117.

This sequence belongs to the class I-like SAM-binding methyltransferase superfamily. rRNA adenine N(6)-methyltransferase family. RsmA subfamily.

The protein resides in the cytoplasm. The catalysed reaction is adenosine(1518)/adenosine(1519) in 16S rRNA + 4 S-adenosyl-L-methionine = N(6)-dimethyladenosine(1518)/N(6)-dimethyladenosine(1519) in 16S rRNA + 4 S-adenosyl-L-homocysteine + 4 H(+). Functionally, specifically dimethylates two adjacent adenosines (A1518 and A1519) in the loop of a conserved hairpin near the 3'-end of 16S rRNA in the 30S particle. May play a critical role in biogenesis of 30S subunits. The sequence is that of Ribosomal RNA small subunit methyltransferase A from Desulforapulum autotrophicum (strain ATCC 43914 / DSM 3382 / VKM B-1955 / HRM2) (Desulfobacterium autotrophicum).